We begin with the raw amino-acid sequence, 158 residues long: Transcription elongation factor GreA (158 aa).

Residues Thr3–Ala75 are a coiled coil.

It belongs to the GreA/GreB family.

Necessary for efficient RNA polymerase transcription elongation past template-encoded arresting sites. The arresting sites in DNA have the property of trapping a certain fraction of elongating RNA polymerases that pass through, resulting in locked ternary complexes. Cleavage of the nascent transcript by cleavage factors such as GreA or GreB allows the resumption of elongation from the new 3'terminus. GreA releases sequences of 2 to 3 nucleotides. This chain is Transcription elongation factor GreA, found in Bacillus cytotoxicus (strain DSM 22905 / CIP 110041 / 391-98 / NVH 391-98).